Consider the following 615-residue polypeptide: Threonine--tRNA ligase (615 aa).

The editing domain stretch occupies residues 1–132 (MRILQLHCDR…PLAEGFKVIT (132 aa)). Residues 196-495 (PHVALMKRMG…SARGTKPELP (300 aa)) are catalytic. Zn(2+)-binding residues include cysteine 288, histidine 340, and histidine 464.

It belongs to the class-II aminoacyl-tRNA synthetase family. In terms of assembly, homodimer. Zn(2+) is required as a cofactor.

It localises to the cytoplasm. It carries out the reaction tRNA(Thr) + L-threonine + ATP = L-threonyl-tRNA(Thr) + AMP + diphosphate + H(+). Its function is as follows. Catalyzes the attachment of threonine to tRNA(Thr) in a two-step reaction: L-threonine is first activated by ATP to form Thr-AMP and then transferred to the acceptor end of tRNA(Thr). Also edits incorrectly charged L-seryl-tRNA(Thr). In Cenarchaeum symbiosum (strain A), this protein is Threonine--tRNA ligase (thrS).